Reading from the N-terminus, the 430-residue chain is 3-phosphoshikimate 1-carboxyvinyltransferase (430 aa).

3-phosphoshikimate contacts are provided by K23, S24, and R28. Phosphoenolpyruvate is bound at residue K23. Residues G95 and R123 each contribute to the phosphoenolpyruvate site. 3-phosphoshikimate is bound by residues S169, Q171, D315, and K342. Residue Q171 participates in phosphoenolpyruvate binding. D315 serves as the catalytic Proton acceptor. The phosphoenolpyruvate site is built by R346 and R388.

This sequence belongs to the EPSP synthase family. Monomer.

Its subcellular location is the cytoplasm. It carries out the reaction 3-phosphoshikimate + phosphoenolpyruvate = 5-O-(1-carboxyvinyl)-3-phosphoshikimate + phosphate. The protein operates within metabolic intermediate biosynthesis; chorismate biosynthesis; chorismate from D-erythrose 4-phosphate and phosphoenolpyruvate: step 6/7. Catalyzes the transfer of the enolpyruvyl moiety of phosphoenolpyruvate (PEP) to the 5-hydroxyl of shikimate-3-phosphate (S3P) to produce enolpyruvyl shikimate-3-phosphate and inorganic phosphate. This Streptococcus pyogenes serotype M3 (strain ATCC BAA-595 / MGAS315) protein is 3-phosphoshikimate 1-carboxyvinyltransferase.